We begin with the raw amino-acid sequence, 380 residues long: Tryptophan 2,3-dioxygenase (380 aa).

Substrate contacts are provided by residues 57–61 (FIITH) and Arg128. Position 313 (His313) interacts with heme. Thr328 is a substrate binding site.

It belongs to the tryptophan 2,3-dioxygenase family. Homotetramer. Dimer of dimers. Requires heme as cofactor.

The enzyme catalyses L-tryptophan + O2 = N-formyl-L-kynurenine. It participates in amino-acid degradation; L-tryptophan degradation via kynurenine pathway; L-kynurenine from L-tryptophan: step 1/2. It functions in the pathway pigment biosynthesis; ommochrome biosynthesis. In terms of biological role, heme-dependent dioxygenase that catalyzes the oxidative cleavage of the L-tryptophan (L-Trp) pyrrole ring and converts L-tryptophan to N-formyl-L-kynurenine. Catalyzes the oxidative cleavage of the indole moiety. This is Tryptophan 2,3-dioxygenase from Drosophila persimilis (Fruit fly).